A 386-amino-acid chain; its full sequence is Patatin group M-2 (386 aa).

The first 23 residues, 1–23 (MATTKSFLILFFMILATTSSTCA), serve as a signal peptide directing secretion. The PNPLA domain occupies 32–229 (LSIDGGGIKG…TVGDPALLSL (198 aa)). The short motif at 36 to 41 (GGGIKG) is the GXGXXG element. Positions 75-79 (GTSTG) match the GXSXG motif. The active-site Nucleophile is the Ser-77. N-linked (GlcNAc...) asparagine glycosylation occurs at Asn-115. The active-site Proton acceptor is Asp-215. A DGA/G motif is present at residues 215–217 (DGG). Residues 321–384 (ENALTGTTTE…DRKKLRANKA (64 aa)) are a coiled coil.

This sequence belongs to the patatin family. As to expression, tuber.

Its subcellular location is the vacuole. Functionally, probable lipolytic acyl hydrolase (LAH), an activity which is thought to be involved in the response of tubers to pathogens. This is Patatin group M-2 from Solanum tuberosum (Potato).